Here is a 122-residue protein sequence, read N- to C-terminus: Large ribosomal subunit protein bL12 (122 aa).

It belongs to the bacterial ribosomal protein bL12 family. As to quaternary structure, homodimer. Part of the ribosomal stalk of the 50S ribosomal subunit. Forms a multimeric L10(L12)X complex, where L10 forms an elongated spine to which 2 to 4 L12 dimers bind in a sequential fashion. Binds GTP-bound translation factors.

Forms part of the ribosomal stalk which helps the ribosome interact with GTP-bound translation factors. Is thus essential for accurate translation. This Glaesserella parasuis serovar 5 (strain SH0165) (Haemophilus parasuis) protein is Large ribosomal subunit protein bL12.